Reading from the N-terminus, the 603-residue chain is Proline--tRNA ligase (603 aa).

The protein belongs to the class-II aminoacyl-tRNA synthetase family. ProS type 1 subfamily. Homodimer.

The protein localises to the cytoplasm. The enzyme catalyses tRNA(Pro) + L-proline + ATP = L-prolyl-tRNA(Pro) + AMP + diphosphate. Its function is as follows. Catalyzes the attachment of proline to tRNA(Pro) in a two-step reaction: proline is first activated by ATP to form Pro-AMP and then transferred to the acceptor end of tRNA(Pro). As ProRS can inadvertently accommodate and process non-cognate amino acids such as alanine and cysteine, to avoid such errors it has two additional distinct editing activities against alanine. One activity is designated as 'pretransfer' editing and involves the tRNA(Pro)-independent hydrolysis of activated Ala-AMP. The other activity is designated 'posttransfer' editing and involves deacylation of mischarged Ala-tRNA(Pro). The misacylated Cys-tRNA(Pro) is not edited by ProRS. This chain is Proline--tRNA ligase, found in Prochlorococcus marinus (strain SARG / CCMP1375 / SS120).